The sequence spans 217 residues: Thiosulfate dehydrogenase electron acceptor (217 aa).

The signal sequence occupies residues 1-28 (MRQFIPMRRVLAVATLGALFWAAPASWA). 2 Cytochrome c domains span residues 29 to 104 (AAPP…SKLK) and 116 to 206 (AAAA…AAQP). The heme c site is built by cysteine 37, cysteine 40, histidine 41, cysteine 137, cysteine 140, and histidine 141.

In terms of processing, binds 2 heme c groups covalently per subunit.

In terms of biological role, acts as an electron acceptor for the thiosulfate dehydrogenase TsdA. The polypeptide is Thiosulfate dehydrogenase electron acceptor (tsdB) (Thiomonas intermedia (strain K12) (Thiobacillus intermedius)).